The sequence spans 326 residues: tRNA-modifying protein YgfZ (326 aa).

Trp27 and Trp189 together coordinate folate.

Belongs to the tRNA-modifying YgfZ family.

It localises to the cytoplasm. Its function is as follows. Folate-binding protein involved in regulating the level of ATP-DnaA and in the modification of some tRNAs. It is probably a key factor in regulatory networks that act via tRNA modification, such as initiation of chromosomal replication. The polypeptide is tRNA-modifying protein YgfZ (Escherichia coli O17:K52:H18 (strain UMN026 / ExPEC)).